Consider the following 132-residue polypeptide: Small ribosomal subunit protein uS9 (132 aa).

The interval Leu100–Arg132 is disordered. Basic residues predominate over residues Glu114–Arg132.

The protein belongs to the universal ribosomal protein uS9 family.

The sequence is that of Small ribosomal subunit protein uS9 from Dehalococcoides mccartyi (strain ATCC BAA-2100 / JCM 16839 / KCTC 5957 / BAV1).